Here is a 533-residue protein sequence, read N- to C-terminus: Probable protein kinase UbiB (533 aa).

A helical membrane pass occupies residues 24–44; the sequence is LILELPMLPWWLRLLGATLPW. Positions 126-494 constitute a Protein kinase domain; the sequence is RFEREPLASA…WKGSRHDWLG (369 aa). ATP contacts are provided by residues 132-140 and Lys-154; that span reads LASASVAQV. Asp-289 serves as the catalytic Proton acceptor. Residues 510–530 traverse the membrane as a helical segment; that stretch reads LGQQLEAWPAWVMLAGGVFLI.

Belongs to the ABC1 family. UbiB subfamily.

The protein localises to the cell inner membrane. It functions in the pathway cofactor biosynthesis; ubiquinone biosynthesis [regulation]. Its function is as follows. Is probably a protein kinase regulator of UbiI activity which is involved in aerobic coenzyme Q (ubiquinone) biosynthesis. The protein is Probable protein kinase UbiB of Pseudomonas aeruginosa (strain UCBPP-PA14).